Consider the following 176-residue polypeptide: Large ribosomal subunit protein uL6 (176 aa).

It belongs to the universal ribosomal protein uL6 family. In terms of assembly, part of the 50S ribosomal subunit.

In terms of biological role, this protein binds to the 23S rRNA, and is important in its secondary structure. It is located near the subunit interface in the base of the L7/L12 stalk, and near the tRNA binding site of the peptidyltransferase center. The polypeptide is Large ribosomal subunit protein uL6 (Lactobacillus delbrueckii subsp. bulgaricus (strain ATCC 11842 / DSM 20081 / BCRC 10696 / JCM 1002 / NBRC 13953 / NCIMB 11778 / NCTC 12712 / WDCM 00102 / Lb 14)).